The following is a 411-amino-acid chain: Probable indole-3-pyruvate monooxygenase YUCCA4 (411 aa).

21 to 26 contacts FAD; that stretch reads GAGPSG. 183 to 188 is a binding site for NADP(+); it reads GCGNSG.

Belongs to the FMO family. It depends on FAD as a cofactor. In terms of tissue distribution, expressed in leaves, stems, flowers, buds and siliques. Detected in the apical gynoecium and in the developing ovules.

The protein resides in the cytoplasm. The protein localises to the endoplasmic reticulum membrane. The enzyme catalyses indole-3-pyruvate + NADPH + O2 + H(+) = (indol-3-yl)acetate + CO2 + NADP(+) + H2O. It functions in the pathway plant hormone metabolism; auxin biosynthesis. Its function is as follows. Involved in auxin biosynthesis. Both isoforms are catalitically active. Involved during embryogenesis and seedling development. Required for the formation of floral organs and vascular tissues. Belongs to the set of redundant YUCCA genes probably responsible for auxin biosynthesis in shoots. This is Probable indole-3-pyruvate monooxygenase YUCCA4 (YUC4) from Arabidopsis thaliana (Mouse-ear cress).